A 260-amino-acid polypeptide reads, in one-letter code: Indole-3-glycerol phosphate synthase (260 aa).

Belongs to the TrpC family.

It carries out the reaction 1-(2-carboxyphenylamino)-1-deoxy-D-ribulose 5-phosphate + H(+) = (1S,2R)-1-C-(indol-3-yl)glycerol 3-phosphate + CO2 + H2O. It participates in amino-acid biosynthesis; L-tryptophan biosynthesis; L-tryptophan from chorismate: step 4/5. The protein is Indole-3-glycerol phosphate synthase of Staphylococcus aureus (strain MSSA476).